A 188-amino-acid chain; its full sequence is Single-stranded DNA-binding protein DdrB (188 aa).

Residues 140-188 (YAVPGGAAGNGQGRPAPQGQPAQARPQATAARPAARPPVQPGQEEETPF) form a disordered region. Positions 152-173 (GRPAPQGQPAQARPQATAARPA) are enriched in low complexity.

In terms of assembly, homopentamer arranged in a ring-structure; DNA binds between subunits and along the top of the ring. The pentamers self-associate to coat ssDNA in higher-ordered structures; oligomerization facilitates the assembly of extended nucleoprotein complexes. Self-assembly does not however require ssDNA-binding. Interacts with SSB.

Functionally, ssDNA-binding protein that contributes to the ionizing radiation resistance of D.radiodurans. Plays a role in DNA repair and genome reconstitution in a RecA-independent process. Required for recovery from severe genomic fragmentation as a result of exposure to severe levels of ionizing radiation. Binds ssDNA but not dsDNA. Stimulates annealing of complementary ssDNA. Does not complement an ssb disruption. In Deinococcus radiodurans (strain ATCC 13939 / DSM 20539 / JCM 16871 / CCUG 27074 / LMG 4051 / NBRC 15346 / NCIMB 9279 / VKM B-1422 / R1), this protein is Single-stranded DNA-binding protein DdrB (ddrB).